Here is a 281-residue protein sequence, read N- to C-terminus: AT-hook motif nuclear-localized protein 20 (281 aa).

Disordered regions lie at residues 43–85 (MNQS…APIF) and 216–247 (MEEE…DLSG). The segment at residues 67–79 (RRPRGRPPGSKNK) is a DNA-binding region (a.T hook). Positions 91-229 (PNALRSHVLE…EDGGGSRQIH (139 aa)) constitute a PPC domain.

The protein localises to the nucleus. Its function is as follows. Transcription factor that specifically binds AT-rich DNA sequences related to the nuclear matrix attachment regions (MARs). Negatively regulates plant innate immunity (PTI) to pathogens through the down-regulation of the PAMP-triggered NHO1 and FRK1 expression. The protein is AT-hook motif nuclear-localized protein 20 of Arabidopsis thaliana (Mouse-ear cress).